The chain runs to 298 residues: N-acetylmuramic acid 6-phosphate etherase (298 aa).

Residues 55 to 218 (IHAQVSGGGR…STGLMIKSGK (164 aa)) form the SIS domain. Residue glutamate 83 is the Proton donor of the active site. Glutamate 114 is a catalytic residue.

Belongs to the GCKR-like family. MurNAc-6-P etherase subfamily. As to quaternary structure, homodimer.

It carries out the reaction N-acetyl-D-muramate 6-phosphate + H2O = N-acetyl-D-glucosamine 6-phosphate + (R)-lactate. It functions in the pathway amino-sugar metabolism; 1,6-anhydro-N-acetylmuramate degradation. It participates in amino-sugar metabolism; N-acetylmuramate degradation. Its pathway is cell wall biogenesis; peptidoglycan recycling. Specifically catalyzes the cleavage of the D-lactyl ether substituent of MurNAc 6-phosphate, producing GlcNAc 6-phosphate and D-lactate. Together with AnmK, is also required for the utilization of anhydro-N-acetylmuramic acid (anhMurNAc) either imported from the medium or derived from its own cell wall murein, and thus plays a role in cell wall recycling. The polypeptide is N-acetylmuramic acid 6-phosphate etherase (Shigella sonnei (strain Ss046)).